The following is a 217-amino-acid chain: LexA repressor (217 aa).

The segment at residues arginine 28–arginine 48 is a DNA-binding region (H-T-H motif). Active-site for autocatalytic cleavage activity residues include serine 136 and lysine 173.

It belongs to the peptidase S24 family. As to quaternary structure, homodimer.

It catalyses the reaction Hydrolysis of Ala-|-Gly bond in repressor LexA.. Functionally, represses a number of genes involved in the response to DNA damage (SOS response), including recA and lexA. In the presence of single-stranded DNA, RecA interacts with LexA causing an autocatalytic cleavage which disrupts the DNA-binding part of LexA, leading to derepression of the SOS regulon and eventually DNA repair. In Cupriavidus taiwanensis (strain DSM 17343 / BCRC 17206 / CCUG 44338 / CIP 107171 / LMG 19424 / R1) (Ralstonia taiwanensis (strain LMG 19424)), this protein is LexA repressor.